The sequence spans 705 residues: Ribosomal RNA large subunit methyltransferase K/L (705 aa).

Positions 43–154 (VVYRCCLWSR…GEKGILGFDL (112 aa)) constitute a THUMP domain.

It belongs to the methyltransferase superfamily. RlmKL family.

The protein resides in the cytoplasm. It carries out the reaction guanosine(2445) in 23S rRNA + S-adenosyl-L-methionine = N(2)-methylguanosine(2445) in 23S rRNA + S-adenosyl-L-homocysteine + H(+). It catalyses the reaction guanosine(2069) in 23S rRNA + S-adenosyl-L-methionine = N(2)-methylguanosine(2069) in 23S rRNA + S-adenosyl-L-homocysteine + H(+). In terms of biological role, specifically methylates the guanine in position 2445 (m2G2445) and the guanine in position 2069 (m7G2069) of 23S rRNA. The sequence is that of Ribosomal RNA large subunit methyltransferase K/L from Aliivibrio fischeri (strain ATCC 700601 / ES114) (Vibrio fischeri).